Here is a 95-residue protein sequence, read N- to C-terminus: Aspartyl/glutamyl-tRNA(Asn/Gln) amidotransferase subunit C (95 aa).

It belongs to the GatC family. As to quaternary structure, heterotrimer of A, B and C subunits.

The enzyme catalyses L-glutamyl-tRNA(Gln) + L-glutamine + ATP + H2O = L-glutaminyl-tRNA(Gln) + L-glutamate + ADP + phosphate + H(+). The catalysed reaction is L-aspartyl-tRNA(Asn) + L-glutamine + ATP + H2O = L-asparaginyl-tRNA(Asn) + L-glutamate + ADP + phosphate + 2 H(+). In terms of biological role, allows the formation of correctly charged Asn-tRNA(Asn) or Gln-tRNA(Gln) through the transamidation of misacylated Asp-tRNA(Asn) or Glu-tRNA(Gln) in organisms which lack either or both of asparaginyl-tRNA or glutaminyl-tRNA synthetases. The reaction takes place in the presence of glutamine and ATP through an activated phospho-Asp-tRNA(Asn) or phospho-Glu-tRNA(Gln). In Nitrobacter winogradskyi (strain ATCC 25391 / DSM 10237 / CIP 104748 / NCIMB 11846 / Nb-255), this protein is Aspartyl/glutamyl-tRNA(Asn/Gln) amidotransferase subunit C.